We begin with the raw amino-acid sequence, 32 residues long: Trypsin inhibitor 3 (32 aa).

Cystine bridges form between C6–C23, C13–C25, and C19–C31.

This sequence belongs to the protease inhibitor I7 (squash-type serine protease inhibitor) family.

The protein localises to the secreted. Its function is as follows. Inhibits trypsin. The polypeptide is Trypsin inhibitor 3 (Cucurbita pepo (Vegetable marrow)).